We begin with the raw amino-acid sequence, 601 residues long: NADH-quinone oxidoreductase subunit C/D (601 aa).

An NADH dehydrogenase I subunit C region spans residues 1–192 (MIVPDLVADA…PPYSLTEDQE (192 aa)). Residues 216–601 (DFMFLNLGPN…IDFVMADVDR (386 aa)) form an NADH dehydrogenase I subunit D region.

In the N-terminal section; belongs to the complex I 30 kDa subunit family. This sequence in the C-terminal section; belongs to the complex I 49 kDa subunit family. NDH-1 is composed of 13 different subunits. Subunits NuoB, CD, E, F, and G constitute the peripheral sector of the complex.

Its subcellular location is the cell inner membrane. The catalysed reaction is a quinone + NADH + 5 H(+)(in) = a quinol + NAD(+) + 4 H(+)(out). Functionally, NDH-1 shuttles electrons from NADH, via FMN and iron-sulfur (Fe-S) centers, to quinones in the respiratory chain. The immediate electron acceptor for the enzyme in this species is believed to be ubiquinone. Couples the redox reaction to proton translocation (for every two electrons transferred, four hydrogen ions are translocated across the cytoplasmic membrane), and thus conserves the redox energy in a proton gradient. The sequence is that of NADH-quinone oxidoreductase subunit C/D from Gluconacetobacter diazotrophicus (strain ATCC 49037 / DSM 5601 / CCUG 37298 / CIP 103539 / LMG 7603 / PAl5).